A 718-amino-acid polypeptide reads, in one-letter code: Potassium channel KAT1 (718 aa).

Topologically, residues 1 to 60 (MTQAHSKSCFHQFWDGLQIKRSSDSFTVELLPSLGATINHSNKLQKFIISPYDPRYRSWE) are cytoplasmic. The helical transmembrane segment at 61–81 (LFLIVLVVYSAWICPFELAFL) threads the bilayer. Residues 82 to 88 (RDLPSKL) are Extracellular-facing. Residues 89–109 (LLVENIVDIFFAIDIVLTFFV) form a helical membrane-spanning segment. At 110-132 (AYVDSKTHLLVDDRKRIAMRYLS) the chain is on the cytoplasmic side. A helical membrane pass occupies residues 133–153 (TWFIFDVCSTAPFQPIILLFT). Residues 154-162 (HKGNDIAFK) are Extracellular-facing. The chain crosses the membrane as a helical; Voltage-sensor span at residues 163–183 (VLNLLRLWRLHRVSSLFARLE). Residues 184-197 (KDIRFNYFWTRCSK) lie on the Cytoplasmic side of the membrane. Residues 198-218 (LISVTLFAVHCAGCFNYMIAD) traverse the membrane as a helical segment. The Extracellular portion of the chain corresponds to 219–245 (RYPNPEKTWIGAVMSTFRSESLWTRYI). Positions 246–265 (TALYWSITTLTTTGYGDLHA) form an intramembrane region, pore-forming. The Extracellular portion of the chain corresponds to 266–269 (ENPT). A helical membrane pass occupies residues 270–290 (EMLFDIVYMMFNLGLTAYLIG). Topologically, residues 291-718 (NMTNLVVHGT…DGDHLFLLEM (428 aa)) are cytoplasmic. 374–493 (LFNGVSGNFI…NILMNNLVQK (120 aa)) lines the a nucleoside 3',5'-cyclic phosphate pocket. The segment at 560-584 (EATRSSASENENSSMTDKEENHDEV) is disordered. The segment covering 562 to 574 (TRSSASENENSSM) has biased composition (polar residues). Over residues 575–584 (TDKEENHDEV) the composition is skewed to basic and acidic residues. Residues 647 to 718 (RVTIHKYRHN…DGDHLFLLEM (72 aa)) enclose the KHA domain.

Belongs to the potassium channel family. Plant (TC 1.A.1.4) subfamily.

The protein localises to the membrane. Functionally, probable inward-rectifying potassium channel. Assuming opened or closed conformations in response to the voltage difference across the membrane, the channel is activated by hyperpolarization. This Oryza sativa subsp. japonica (Rice) protein is Potassium channel KAT1.